We begin with the raw amino-acid sequence, 374 residues long: Mannitol-1-phosphate 5-dehydrogenase (374 aa).

Residue 3-14 (AVHFGAGNIGRG) participates in NAD(+) binding.

Belongs to the mannitol dehydrogenase family.

It catalyses the reaction D-mannitol 1-phosphate + NAD(+) = beta-D-fructose 6-phosphate + NADH + H(+). In Shouchella clausii (strain KSM-K16) (Alkalihalobacillus clausii), this protein is Mannitol-1-phosphate 5-dehydrogenase.